The following is a 315-amino-acid chain: Secreted frizzled-related protein 5 (315 aa).

Residues 1–27 (MRAAAGGARAAVLALLLGALHGAPARG) form the signal peptide. Residues 46–163 (SKPPQCLDIP…PLDNDLCIAV (118 aa)) form the FZ domain. Cystine bridges form between Cys51–Cys114, Cys61–Cys107, Cys98–Cys133, Cys122–Cys160, Cys126–Cys150, Cys179–Cys251, Cys182–Cys253, and Cys196–Cys301. In terms of domain architecture, NTR spans 179-301 (CAQCEMEHSA…AVKFMFSYPC (123 aa)).

It belongs to the secreted frizzled-related protein (sFRP) family. In terms of tissue distribution, strongly expressed in the retinal pigment epithelium (RPE). Weak expression in retina, brain, heart, liver, kidney, testis and muscle.

It localises to the secreted. Soluble frizzled-related proteins (sFRPS) function as modulators of Wnt signaling through direct interaction with Wnts. They have a role in regulating cell growth and differentiation in specific cell types. SFRP5 may be involved in determining the polarity of photoreceptor, and perhaps other, cells in the retina. Inhibits Wnt8 signaling, in vitro. This Bos taurus (Bovine) protein is Secreted frizzled-related protein 5 (SFRP5).